The following is an 88-amino-acid chain: MVVKTVRVLNRAGVHARPAALIVQAASRFDSKIMLVRDTIRVNAKSIMGVMAMAAGCGSELELVVEGPDEVAALSAIERLFQNKFEEE.

The 88-residue stretch at 1–88 (MVVKTVRVLN…RLFQNKFEEE (88 aa)) folds into the HPr domain. The active-site Pros-phosphohistidine intermediate is the His15. Ser46 carries the post-translational modification Phosphoserine; by HPrK/P.

The protein belongs to the HPr family.

It localises to the cytoplasm. With respect to regulation, phosphorylation on Ser-46 inhibits the phosphoryl transfer from enzyme I to HPr. Functionally, general (non sugar-specific) component of the phosphoenolpyruvate-dependent sugar phosphotransferase system (sugar PTS). This major carbohydrate active-transport system catalyzes the phosphorylation of incoming sugar substrates concomitantly with their translocation across the cell membrane. The phosphoryl group from phosphoenolpyruvate (PEP) is transferred to the phosphoryl carrier protein HPr by enzyme I. Phospho-HPr then transfers it to the PTS EIIA domain. This chain is Phosphocarrier protein HPr (ptsH), found in Treponema pallidum (strain Nichols).